Here is a 129-residue protein sequence, read N- to C-terminus: Phosphoribosyl-AMP cyclohydrolase (129 aa).

A Mg(2+)-binding site is contributed by D77. Residue C78 participates in Zn(2+) binding. Residues D79 and D81 each coordinate Mg(2+). Residues C94 and C101 each contribute to the Zn(2+) site.

It belongs to the PRA-CH family. In terms of assembly, homodimer. The cofactor is Mg(2+). Requires Zn(2+) as cofactor.

The protein resides in the cytoplasm. The enzyme catalyses 1-(5-phospho-beta-D-ribosyl)-5'-AMP + H2O = 1-(5-phospho-beta-D-ribosyl)-5-[(5-phospho-beta-D-ribosylamino)methylideneamino]imidazole-4-carboxamide. It participates in amino-acid biosynthesis; L-histidine biosynthesis; L-histidine from 5-phospho-alpha-D-ribose 1-diphosphate: step 3/9. In terms of biological role, catalyzes the hydrolysis of the adenine ring of phosphoribosyl-AMP. This is Phosphoribosyl-AMP cyclohydrolase from Methanosphaera stadtmanae (strain ATCC 43021 / DSM 3091 / JCM 11832 / MCB-3).